A 226-amino-acid chain; its full sequence is Brachyurin (226 aa).

The Peptidase S1 domain occupies isoleucine 1–glycine 223. Cysteine 26 and cysteine 42 are joined by a disulfide. Catalysis depends on charge relay system residues histidine 41 and aspartate 87. Cystine bridges form between cysteine 151–cysteine 164 and cysteine 174–cysteine 200. The active-site Charge relay system is serine 178.

Belongs to the peptidase S1 family.

The enzyme catalyses Hydrolysis of proteins, with broad specificity for peptide bonds. Native collagen is cleaved about 75% of the length of the molecule from the N-terminus. Low activity on small molecule substrates of both trypsin and chymotrypsin.. Functionally, this enzyme is a serine protease capable of degrading the native triple helix of collagen. The chain is Brachyurin from Leptuca pugilator (Atlantic sand fiddler crab).